Reading from the N-terminus, the 134-residue chain is Global transcriptional regulator Spx (134 aa).

C10 and C13 form a disulfide bridge.

The protein belongs to the ArsC family. Spx subfamily. Interacts with the C-terminal domain of the alpha subunit of the RNAP.

It localises to the cytoplasm. Its function is as follows. Global transcriptional regulator that plays a key role in stress response and exerts either positive or negative regulation of genes. Acts by interacting with the C-terminal domain of the alpha subunit of the RNA polymerase (RNAP). This interaction can enhance binding of RNAP to the promoter region of target genes and stimulate their transcription, or block interaction of RNAP with activator. The chain is Global transcriptional regulator Spx from Streptococcus pyogenes serotype M6 (strain ATCC BAA-946 / MGAS10394).